Here is a 417-residue protein sequence, read N- to C-terminus: MRQSHQLPLVGLLLFSLIPSQLCQSCVVSEKDYSHLRLLISAMDNLEQIRGIYGASILLSQRLAGIQNPSLEEELSQRIQDDMNRRDMSNLTSGQLALIILAFGACKTPDVRFIHDHHLVEKLGEKFKEEIKNMEIHNSNPLTNYYQLSFDVLTLCLFRGNYSISNVTHYFNPENKNFNLSGHFSVDTGAVAVLALTCVKRSISNGKIKAAIKDSDTIQKYIESLVHKIQSEKMVVSLETRIAQEKLCRLSLSHQTITKMNQIAKKLWTRCLTHSQGVFRLPIAAAQILPALLGKTYLDVTKLLLVPKVQVNITDEPVPVVPTLSPENISVIYCVKINEISNCINITVFLDVMKAAQEKNSTIYGFTMTETPWGPYITSVQGIWANNNERTYWEHSEQQQITKPRSMGIMLSKMESI.

An N-terminal signal peptide occupies residues 1-25 (MRQSHQLPLVGLLLFSLIPSQLCQS). The globular N-terminal alpha domain stretch occupies residues 24-308 (QSCVVSEKDY…DVTKLLLVPK (285 aa)). Asn90 carries an N-linked (GlcNAc...) asparagine glycan. A cyanocob(III)alamin-binding site is contributed by 143-147 (TNYYQ). Cys156 and Cys198 form a disulfide bridge. Residues Asn161, Asn166, and Asn179 are each glycosylated (N-linked (GlcNAc...) asparagine). Positions 187 and 287 each coordinate cyanocob(III)alamin. The tract at residues 309–327 (VQVNITDEPVPVVPTLSPE) is flexible linker. Residues Asn312, Asn328, Asn345, and Asn360 are each glycosylated (N-linked (GlcNAc...) asparagine). Residues 328-417 (NISVIYCVKI…GIMLSKMESI (90 aa)) form a globular C-terminal beta domain region. Cyanocob(III)alamin-binding positions include 376-377 (YI) and 393-395 (WEH).

It belongs to the eukaryotic cobalamin transport proteins family. Contains about 30% carbohydrates. As to expression, haptocorrins are a family of cobalamin-binding glycoproteins found in blood, salivary and mucosal secretions.

It is found in the secreted. Binds vitamin B12 with femtomolar affinity and protects it from the acidic environment of the stomach. Binds to cobalamin and to cobalamin analogs such as cobinamide. This chain is Transcobalamin-1 (TCN1), found in Sus scrofa (Pig).